A 145-amino-acid chain; its full sequence is MSGLAASWSLKPLGPHGVTQALCAVLLAVLVTMNVVLGDTLLDIPSQSPPLNQYLHCYRCLLETEELGCLLGSDTCLTPLGSTCVTLHIKNSSGFNVMVSDCRNKEQMVDCSYTRASPVFGFWIFYQCCFLDFCNNPKNRKNTMH.

Positions 1–38 are cleaved as a signal peptide; it reads MSGLAASWSLKPLGPHGVTQALCAVLLAVLVTMNVVLG. A UPAR/Ly6 domain is found at 55–145; it reads LHCYRCLLET…NPKNRKNTMH (91 aa). 5 disulfides stabilise this stretch: Cys57/Cys84, Cys60/Cys69, Cys76/Cys102, Cys111/Cys128, and Cys129/Cys134. An N-linked (GlcNAc...) asparagine glycan is attached at Asn91.

In terms of assembly, forms oligomers. Post-translationally, N-glycosylated. Expression restricted to the caput of epididymis. Detected only from day 24 postnatum.

The protein localises to the secreted. Functionally, may have a role in hematopoietic cell differentiation. In Rattus norvegicus (Rat), this protein is Lymphocyte antigen 6 complex locus protein G5c (Ly6g5c).